The sequence spans 255 residues: Imidazole glycerol phosphate synthase subunit HisF (255 aa).

Residues aspartate 12 and aspartate 131 contribute to the active site.

This sequence belongs to the HisA/HisF family. Heterodimer of HisH and HisF.

It localises to the cytoplasm. The enzyme catalyses 5-[(5-phospho-1-deoxy-D-ribulos-1-ylimino)methylamino]-1-(5-phospho-beta-D-ribosyl)imidazole-4-carboxamide + L-glutamine = D-erythro-1-(imidazol-4-yl)glycerol 3-phosphate + 5-amino-1-(5-phospho-beta-D-ribosyl)imidazole-4-carboxamide + L-glutamate + H(+). It functions in the pathway amino-acid biosynthesis; L-histidine biosynthesis; L-histidine from 5-phospho-alpha-D-ribose 1-diphosphate: step 5/9. In terms of biological role, IGPS catalyzes the conversion of PRFAR and glutamine to IGP, AICAR and glutamate. The HisF subunit catalyzes the cyclization activity that produces IGP and AICAR from PRFAR using the ammonia provided by the HisH subunit. This is Imidazole glycerol phosphate synthase subunit HisF from Sphingopyxis alaskensis (strain DSM 13593 / LMG 18877 / RB2256) (Sphingomonas alaskensis).